Reading from the N-terminus, the 301-residue chain is 4-hydroxy-tetrahydrodipicolinate synthase (301 aa).

Position 46 (Thr46) interacts with pyruvate. The active-site Proton donor/acceptor is Tyr134. Lys162 (schiff-base intermediate with substrate) is an active-site residue. A pyruvate-binding site is contributed by Ile203.

Belongs to the DapA family. As to quaternary structure, homotetramer; dimer of dimers.

The protein localises to the cytoplasm. It carries out the reaction L-aspartate 4-semialdehyde + pyruvate = (2S,4S)-4-hydroxy-2,3,4,5-tetrahydrodipicolinate + H2O + H(+). The protein operates within amino-acid biosynthesis; L-lysine biosynthesis via DAP pathway; (S)-tetrahydrodipicolinate from L-aspartate: step 3/4. Catalyzes the condensation of (S)-aspartate-beta-semialdehyde [(S)-ASA] and pyruvate to 4-hydroxy-tetrahydrodipicolinate (HTPA). The chain is 4-hydroxy-tetrahydrodipicolinate synthase from Anaplasma marginale (strain St. Maries).